The chain runs to 224 residues: 7-cyano-7-deazaguanine synthase (224 aa).

Met12–Ala22 serves as a coordination point for ATP. The Zn(2+) site is built by Cys191, Cys199, Cys202, and Cys205.

The protein belongs to the QueC family. It depends on Zn(2+) as a cofactor.

It carries out the reaction 7-carboxy-7-deazaguanine + NH4(+) + ATP = 7-cyano-7-deazaguanine + ADP + phosphate + H2O + H(+). It participates in purine metabolism; 7-cyano-7-deazaguanine biosynthesis. Catalyzes the ATP-dependent conversion of 7-carboxy-7-deazaguanine (CDG) to 7-cyano-7-deazaguanine (preQ(0)). The sequence is that of 7-cyano-7-deazaguanine synthase from Sulfurimonas denitrificans (strain ATCC 33889 / DSM 1251) (Thiomicrospira denitrificans (strain ATCC 33889 / DSM 1251)).